Consider the following 312-residue polypeptide: Apolipoprotein E (312 aa).

The N-terminal stretch at 1-18 (MKALWALLLVPLLTGCLA) is a signal peptide. 8 repeat units span residues 72 to 93 (VLMEDTMTEVKAYKKELEEQLG), 94 to 115 (PVAEETRARLAKEVQAAQARLG), 116 to 137 (ADMEDLRNRLGQYRNEVNTMLG), 138 to 159 (QSTEELRSRLSTHLRKMRKRLM), 160 to 181 (RDADDLQKRLAVYKAGAQEGAE), 182 to 203 (RGVSAIRERLGPLVEQGRQRTA), 204 to 225 (NLGAGAAQPLRDRAQALSDRIR), and 226 to 247 (GRLEEVGNQARDRLEEVREQME). Positions 72–247 (VLMEDTMTEV…RLEEVREQME (176 aa)) are 8 X 22 AA approximate tandem repeats. Methionine 135 carries the post-translational modification Methionine sulfoxide. A Phosphoserine modification is found at serine 139. The tract at residues 150–160 (HLRKMRKRLMR) is LDL and other lipoprotein receptors binding. The tract at residues 150 to 160 (HLRKMRKRLMR) is LDL receptor binding. Position 154–157 (154–157 (MRKR)) interacts with heparin. The tract at residues 202–282 (TANLGAGAAQ…GWFEPLVEDM (81 aa)) is lipid-binding and lipoprotein association. 221–228 (SDRIRGRL) serves as a coordination point for heparin. The segment at 258-312 (QQIRLQAEIFQARIKGWFEPLVEDMQRQWANLMEKIQASVATNSIASTTVPLENQ) is homooligomerization. The specificity for association with VLDL stretch occupies residues 270–282 (RIKGWFEPLVEDM).

The protein belongs to the apolipoprotein A1/A4/E family. Homotetramer. May interact with ABCA1; functionally associated with ABCA1 in the biogenesis of HDLs. May interact with APP/A4 amyloid-beta peptide; the interaction is extremely stable in vitro but its physiological significance is unclear. May interact with MAPT. May interact with MAP2. In the cerebrospinal fluid, interacts with secreted SORL1. Interacts with PMEL; this allows the loading of PMEL luminal fragment on ILVs to induce fibril nucleation. In terms of processing, APOE exists as multiple glycosylated and sialylated glycoforms within cells and in plasma. The extent of glycosylation and sialylation are tissue and context specific. Glycated in plasma VLDL. Post-translationally, phosphorylated by FAM20C in the extracellular medium.

Its subcellular location is the secreted. The protein resides in the extracellular space. It localises to the extracellular matrix. The protein localises to the extracellular vesicle. It is found in the endosome. Its subcellular location is the multivesicular body. In terms of biological role, APOE is an apolipoprotein, a protein associating with lipid particles, that mainly functions in lipoprotein-mediated lipid transport between organs via the plasma and interstitial fluids. APOE is a core component of plasma lipoproteins and is involved in their production, conversion and clearance. Apolipoproteins are amphipathic molecules that interact both with lipids of the lipoprotein particle core and the aqueous environment of the plasma. As such, APOE associates with chylomicrons, chylomicron remnants, very low density lipoproteins (VLDL) and intermediate density lipoproteins (IDL) but shows a preferential binding to high-density lipoproteins (HDL). It also binds a wide range of cellular receptors including the LDL receptor/LDLR and the very low-density lipoprotein receptor/VLDLR that mediate the cellular uptake of the APOE-containing lipoprotein particles. Finally, APOE also has a heparin-binding activity and binds heparan-sulfate proteoglycans on the surface of cells, a property that supports the capture and the receptor-mediated uptake of APOE-containing lipoproteins by cells. In Rattus norvegicus (Rat), this protein is Apolipoprotein E (Apoe).